Reading from the N-terminus, the 423-residue chain is Imidazolonepropionase (423 aa).

2 residues coordinate Fe(3+): histidine 78 and histidine 80. Residues histidine 78 and histidine 80 each contribute to the Zn(2+) site. 4-imidazolone-5-propanoate-binding residues include arginine 87, tyrosine 150, and histidine 183. An N-formimidoyl-L-glutamate-binding site is contributed by tyrosine 150. Histidine 247 serves as a coordination point for Fe(3+). Histidine 247 serves as a coordination point for Zn(2+). A 4-imidazolone-5-propanoate-binding site is contributed by glutamate 250. Position 322 (aspartate 322) interacts with Fe(3+). Position 322 (aspartate 322) interacts with Zn(2+). Asparagine 324 and glycine 326 together coordinate N-formimidoyl-L-glutamate. Serine 327 lines the 4-imidazolone-5-propanoate pocket.

The protein belongs to the metallo-dependent hydrolases superfamily. HutI family. Zn(2+) is required as a cofactor. Requires Fe(3+) as cofactor.

The protein resides in the cytoplasm. It catalyses the reaction 4-imidazolone-5-propanoate + H2O = N-formimidoyl-L-glutamate. It functions in the pathway amino-acid degradation; L-histidine degradation into L-glutamate; N-formimidoyl-L-glutamate from L-histidine: step 3/3. In terms of biological role, catalyzes the hydrolytic cleavage of the carbon-nitrogen bond in imidazolone-5-propanoate to yield N-formimidoyl-L-glutamate. It is the third step in the universal histidine degradation pathway. This is Imidazolonepropionase from Bacillus cereus (strain ATCC 10987 / NRS 248).